We begin with the raw amino-acid sequence, 159 residues long: MTARGTASRFLTSVLHNGLGRYVQQLQRLSFSLSRDAPSSRGAREFVEREVTDFARRNPGVVIYVNPRPCCVPRVVAEYLNGAVREESLNCKSVEEIATLVQKLADQSGLDVIRIRKPFHTDSPSIQGQWHPFTNKPTALGGLRPREVQNPAPTQRPAQ.

Residues 123-159 (SPSIQGQWHPFTNKPTALGGLRPREVQNPAPTQRPAQ) form a disordered region.

The protein belongs to the mitochondrion-specific ribosomal protein mL43 family. Component of the mitochondrial ribosome large subunit (39S) which comprises a 16S rRNA and about 50 distinct proteins.

Its subcellular location is the mitochondrion. The sequence is that of Large ribosomal subunit protein mL43 (MRPL43) from Bos taurus (Bovine).